The primary structure comprises 166 residues: UPF0304 protein VF_1794 (166 aa).

It belongs to the UPF0304 family.

The polypeptide is UPF0304 protein VF_1794 (Aliivibrio fischeri (strain ATCC 700601 / ES114) (Vibrio fischeri)).